A 140-amino-acid polypeptide reads, in one-letter code: Transcription antitermination protein NusB (140 aa).

It belongs to the NusB family.

In terms of biological role, involved in transcription antitermination. Required for transcription of ribosomal RNA (rRNA) genes. Binds specifically to the boxA antiterminator sequence of the ribosomal RNA (rrn) operons. The polypeptide is Transcription antitermination protein NusB (Pseudoalteromonas atlantica (strain T6c / ATCC BAA-1087)).